Consider the following 156-residue polypeptide: Ribosomal RNA large subunit methyltransferase H (156 aa).

Residues L73, G104, and 123–128 each bind S-adenosyl-L-methionine; that span reads IGPLTL.

It belongs to the RNA methyltransferase RlmH family. Homodimer.

It is found in the cytoplasm. The enzyme catalyses pseudouridine(1915) in 23S rRNA + S-adenosyl-L-methionine = N(3)-methylpseudouridine(1915) in 23S rRNA + S-adenosyl-L-homocysteine + H(+). Its function is as follows. Specifically methylates the pseudouridine at position 1915 (m3Psi1915) in 23S rRNA. This is Ribosomal RNA large subunit methyltransferase H from Xanthomonas euvesicatoria pv. vesicatoria (strain 85-10) (Xanthomonas campestris pv. vesicatoria).